Reading from the N-terminus, the 508-residue chain is Lysine--tRNA ligase (508 aa).

Positions 418 and 425 each coordinate Mg(2+).

The protein belongs to the class-II aminoacyl-tRNA synthetase family. As to quaternary structure, homodimer. Requires Mg(2+) as cofactor.

The protein localises to the cytoplasm. It carries out the reaction tRNA(Lys) + L-lysine + ATP = L-lysyl-tRNA(Lys) + AMP + diphosphate. In Burkholderia cenocepacia (strain HI2424), this protein is Lysine--tRNA ligase.